Consider the following 905-residue polypeptide: Alanine--tRNA ligase (905 aa).

4 residues coordinate Zn(2+): His-569, His-573, Cys-693, and His-697.

This sequence belongs to the class-II aminoacyl-tRNA synthetase family. It depends on Zn(2+) as a cofactor.

It localises to the cytoplasm. The enzyme catalyses tRNA(Ala) + L-alanine + ATP = L-alanyl-tRNA(Ala) + AMP + diphosphate. In terms of biological role, catalyzes the attachment of alanine to tRNA(Ala) in a two-step reaction: alanine is first activated by ATP to form Ala-AMP and then transferred to the acceptor end of tRNA(Ala). Also edits incorrectly charged Ser-tRNA(Ala) and Gly-tRNA(Ala) via its editing domain. This chain is Alanine--tRNA ligase, found in Roseiflexus castenholzii (strain DSM 13941 / HLO8).